Here is a 173-residue protein sequence, read N- to C-terminus: 3-hydroxydecanoyl-[acyl-carrier-protein] dehydratase (173 aa).

The active site involves His71.

Belongs to the thioester dehydratase family. FabA subfamily. Homodimer.

It is found in the cytoplasm. The enzyme catalyses a (3R)-hydroxyacyl-[ACP] = a (2E)-enoyl-[ACP] + H2O. It carries out the reaction (3R)-hydroxydecanoyl-[ACP] = (2E)-decenoyl-[ACP] + H2O. It catalyses the reaction (2E)-decenoyl-[ACP] = (3Z)-decenoyl-[ACP]. The protein operates within lipid metabolism; fatty acid biosynthesis. In terms of biological role, necessary for the introduction of cis unsaturation into fatty acids. Catalyzes the dehydration of (3R)-3-hydroxydecanoyl-ACP to E-(2)-decenoyl-ACP and then its isomerization to Z-(3)-decenoyl-ACP. Can catalyze the dehydratase reaction for beta-hydroxyacyl-ACPs with saturated chain lengths up to 16:0, being most active on intermediate chain length. The polypeptide is 3-hydroxydecanoyl-[acyl-carrier-protein] dehydratase (Bradyrhizobium sp. (strain ORS 278)).